Consider the following 472-residue polypeptide: MSQTPAVSRRLLLGSAAATGALATGIGSAAPVAAAEQAPRRRPGQKSMIGVPFAAHPTVRVAVIGLGNRGGGMITGWAAVPGCTVTAVCDIRADRAERAADRLESKGNPRPAEYGGSADSYARMLRRDDIDLVYIATPWEFHYEHGRAALLSGRHAVVELPVATELRQLWDLVDTSERTRRHLLLSENCNYGRNELAMLKAAHDGLFGDLTNGHGGYLHDLRELLFSDTYYTDSWRRLWHTRSTASFYPMHGLAPIAAAMDVNRGDRMTTLRATTTAPKGLADYRARFVPRDHPSWKETYINGDLVTCMIETAKGRTVRAEHDVSSPRPYSRINTLAGSRGIVEDYAGSAPTGARIYVEPDHGGHTWRDFETYRKEYDHWLWQKVGDDAANNGGHGGMDYVLQWRTVQLMRAGLVPDIDVYDSAAWCSPVPLSVTSLARGGRPVEIPDFTRGAWRERRPGLDSAPTDMPPAG.

The tat-type signal signal peptide spans 1–35 (MSQTPAVSRRLLLGSAAATGALATGIGSAAPVAAA). Residues 68–69 (NR), D90, 139–142 (WEFH), H145, 159–160 (EL), and N188 contribute to the NAD(+) site. Substrate contacts are provided by residues Y217, R236, 248 to 251 (YPMH), and Y330. Y248 contributes to the NAD(+) binding site.

Belongs to the Gfo/Idh/MocA family. Glycosyl hydrolase 109 subfamily. Requires NAD(+) as cofactor. Post-translationally, predicted to be exported by the Tat system. The position of the signal peptide cleavage has not been experimentally proven.

Functionally, glycosidase. Has no alpha-N-acetylgalactosaminidase activity. This Streptomyces coelicolor (strain ATCC BAA-471 / A3(2) / M145) protein is Glycosyl hydrolase family 109 protein.